Here is a 388-residue protein sequence, read N- to C-terminus: Succinate--CoA ligase [ADP-forming] subunit beta (388 aa).

The region spanning 9 to 244 is the ATP-grasp domain; it reads KEILRKYNVP…LDEEDANEIE (236 aa). ATP is bound by residues Lys46, 53 to 55, Glu99, Ala102, and Glu107; that span reads GRG. Positions 199 and 213 each coordinate Mg(2+). Substrate contacts are provided by residues Asn264 and 321–323; that span reads GIM.

The protein belongs to the succinate/malate CoA ligase beta subunit family. Heterotetramer of two alpha and two beta subunits. Requires Mg(2+) as cofactor.

It carries out the reaction succinate + ATP + CoA = succinyl-CoA + ADP + phosphate. It catalyses the reaction GTP + succinate + CoA = succinyl-CoA + GDP + phosphate. Its pathway is carbohydrate metabolism; tricarboxylic acid cycle; succinate from succinyl-CoA (ligase route): step 1/1. Its function is as follows. Succinyl-CoA synthetase functions in the citric acid cycle (TCA), coupling the hydrolysis of succinyl-CoA to the synthesis of either ATP or GTP and thus represents the only step of substrate-level phosphorylation in the TCA. The beta subunit provides nucleotide specificity of the enzyme and binds the substrate succinate, while the binding sites for coenzyme A and phosphate are found in the alpha subunit. The sequence is that of Succinate--CoA ligase [ADP-forming] subunit beta from Cupriavidus taiwanensis (strain DSM 17343 / BCRC 17206 / CCUG 44338 / CIP 107171 / LMG 19424 / R1) (Ralstonia taiwanensis (strain LMG 19424)).